We begin with the raw amino-acid sequence, 172 residues long: MEDTKIRLAIYPGTFDPLTNGHISIIHRAKHLFDKIIIAVAQDSGKKPLFSIEERVSMINTTFFSDHMVDVENFSGLLVDYVEKKNAKTILRGLRAVSDFEYEFQTSLMNRKLCPEIETIFLISDYKWLYISSTVVKTVASLGGDVTDFVPENVLICLKTKYCQSKSNLVIT.

Thr-14 provides a ligand contact to substrate. Residues 14–15 (TF) and His-22 each bind ATP. 3 residues coordinate substrate: Lys-46, Leu-78, and Arg-92. Residues 93–95 (GLR), Glu-103, and 128–134 (WLYISST) contribute to the ATP site.

This sequence belongs to the bacterial CoaD family. Homohexamer. The cofactor is Mg(2+).

It is found in the cytoplasm. It carries out the reaction (R)-4'-phosphopantetheine + ATP + H(+) = 3'-dephospho-CoA + diphosphate. It participates in cofactor biosynthesis; coenzyme A biosynthesis; CoA from (R)-pantothenate: step 4/5. Its function is as follows. Reversibly transfers an adenylyl group from ATP to 4'-phosphopantetheine, yielding dephospho-CoA (dPCoA) and pyrophosphate. The sequence is that of Phosphopantetheine adenylyltransferase from Lawsonia intracellularis (strain PHE/MN1-00).